The sequence spans 752 residues: Probable beta-glucosidase D (752 aa).

The signal sequence occupies residues 1 to 18; sequence MRFVSLAVGAALLGAAGA. Residues N187 and N237 are each glycosylated (N-linked (GlcNAc...) asparagine). D265 is a catalytic residue. Residues N299, N343, N441, N510, N532, N571, N586, N638, N661, and N743 are each glycosylated (N-linked (GlcNAc...) asparagine).

The protein belongs to the glycosyl hydrolase 3 family.

The protein resides in the secreted. The catalysed reaction is Hydrolysis of terminal, non-reducing beta-D-glucosyl residues with release of beta-D-glucose.. It functions in the pathway glycan metabolism; cellulose degradation. Its function is as follows. Beta-glucosidases are one of a number of cellulolytic enzymes involved in the degradation of cellulosic biomass. Catalyzes the last step releasing glucose from the inhibitory cellobiose. This chain is Probable beta-glucosidase D (bglD), found in Aspergillus flavus (strain ATCC 200026 / FGSC A1120 / IAM 13836 / NRRL 3357 / JCM 12722 / SRRC 167).